A 324-amino-acid chain; its full sequence is Beta-ketoacyl-[acyl-carrier-protein] synthase III (324 aa).

Residues cysteine 111 and histidine 251 contribute to the active site. Residues 252–256 (QANTR) are ACP-binding. Residue asparagine 281 is part of the active site.

The protein belongs to the thiolase-like superfamily. FabH family. As to quaternary structure, homodimer.

The protein localises to the plastid. The protein resides in the chloroplast. The enzyme catalyses malonyl-[ACP] + acetyl-CoA + H(+) = 3-oxobutanoyl-[ACP] + CO2 + CoA. It participates in lipid metabolism; fatty acid biosynthesis. Functionally, catalyzes the condensation reaction of fatty acid synthesis by the addition to an acyl acceptor of two carbons from malonyl-ACP. Catalyzes the first condensation reaction which initiates fatty acid synthesis and may therefore play a role in governing the total rate of fatty acid production. Possesses both acetoacetyl-ACP synthase and acetyl transacylase activities. Its substrate specificity determines the biosynthesis of branched-chain and/or straight-chain of fatty acids. The polypeptide is Beta-ketoacyl-[acyl-carrier-protein] synthase III (Pyropia yezoensis (Susabi-nori)).